Reading from the N-terminus, the 1379-residue chain is DNA-directed RNA polymerase subunit beta (1379 aa).

This sequence belongs to the RNA polymerase beta chain family. The RNAP catalytic core consists of 2 alpha, 1 beta, 1 beta' and 1 omega subunit. When a sigma factor is associated with the core the holoenzyme is formed, which can initiate transcription.

It catalyses the reaction RNA(n) + a ribonucleoside 5'-triphosphate = RNA(n+1) + diphosphate. Functionally, DNA-dependent RNA polymerase catalyzes the transcription of DNA into RNA using the four ribonucleoside triphosphates as substrates. The protein is DNA-directed RNA polymerase subunit beta of Rhizobium leguminosarum bv. trifolii (strain WSM2304).